The following is a 1200-amino-acid chain: Zinc finger protein 804A (1200 aa).

A C2H2-type zinc finger spans residues 57–81 (FYCELCDKQYYKHQEFDNHINSYDH). 6 disordered regions span residues 252–280 (STSHLQLPPPTCELLSSEEKGNSPPPEAM), 343–367 (DGPVSKSNPNIIEKNPTVPNDRTSA), 582–687 (HWFH…NCGG), 727–777 (EDDG…SDES), 799–828 (QPKKKRRRKRSRLHIGDGTTKMKGNSNYPM), and 874–949 (PYNP…TNPE). Over residues 585–603 (HKSRRKKKRRKLCRYHPGK) the composition is skewed to basic residues. Residues 604 to 666 (SSKEPEGSGK…ASTHLGEKET (63 aa)) are compositionally biased toward basic and acidic residues. 2 stretches are compositionally biased toward polar residues: residues 667–687 (MNTTVNTESNDAAPGSQNCGG) and 732–756 (LASQSNVKGPTQNQPVKRGYSSLTN). A compositionally biased stretch (basic residues) spans 800-811 (PKKKRRRKRSRL). The segment covering 891 to 944 (TETTPCDSSQTSNDLATPVNVTRDPSNSTTDNTLLEHNQRSQTTNSNEKQTPFK) has biased composition (polar residues).

This is Zinc finger protein 804A (Znf804a) from Mus musculus (Mouse).